A 147-amino-acid chain; its full sequence is Hemoglobin subunit beta (147 aa).

N-acetylvaline is present on valine 2. Residues 3-147 (HMSAEEKGIV…VAAALAHKYH (145 aa)) enclose the Globin domain. A Phosphothreonine modification is found at threonine 13. Serine 45 is modified (phosphoserine). Position 60 is an N6-acetyllysine (lysine 60). Histidine 64 lines the heme b pocket. An N6-acetyllysine modification is found at lysine 83. Residue histidine 93 coordinates heme b. Cysteine 94 bears the S-nitrosocysteine mark. Lysine 145 is subject to N6-acetyllysine.

The protein belongs to the globin family. In terms of assembly, heterotetramer of two alpha chains and two beta chains. In terms of tissue distribution, red blood cells.

In terms of biological role, involved in oxygen transport from the lung to the various peripheral tissues. This chain is Hemoglobin subunit beta (HBB), found in Scalopus aquaticus (Eastern mole).